We begin with the raw amino-acid sequence, 670 residues long: MTFSVQHAEIHFNQNHIPVSDQFDDVYFSNENGLAETDYVFLQGNQLWERWITHKEANFVIAETGFGTGLNFFAVTKLFREFRQQHENHPLKRLNFISFEKYPLKITALLQAHLAYPQFEDLSAHLQRYWPSLILGCHRIHFGETTLDLWLGDVSENLPQLGDYMNERIDAWFLDGFAPSKNPEMWNDDLYNLMFRFTKPNGSFATFTAASAVRKGLESAGFNVTKRKGFGKKRECLSGLKIQSKSTALSTPWYLAQPAKMEQQDVAIIGGGIASLCAAISLVKRGAKVTIYCEDDSLALNASGNKQGAFYPQLSDDNALTVDFYLHAFSYGRQLLDWAIAQNIAFEHEFCGVALCAYNKKSAVKLAKISQLGLPNEIFQMLNAEQLSEKVGLPLNCKGGWIEQGAWLAPRQFVQNAFSFLEKQGVIIKTSQKITALSQLEKGWELKNMQGQKYCHEVVILANGYKITDFVQTEKLPLYPIRGQVSQIPTSENLLKLKSVLCYDGYLTPANQLKTSHCIGASHVRDNVDRHFSEQEQQENQQKLQQNIAQPWTQDVNTSDNLARVGIRCSVRDLAPMVGNVPHFEQQQADYYNLFNLRRRKQPIQSAINFENLFLTAALGSRGLTSAPLLGETLASIIYGEPLPISEGILHNLSANRAWVKKWLKGSKVE.

The tract at residues 1–242 (MTFSVQHAEI…KRECLSGLKI (242 aa)) is tRNA (mnm(5)s(2)U34)-methyltransferase. Residues 269-670 (IGGGIASLCA…KKWLKGSKVE (402 aa)) form an FAD-dependent cmnm(5)s(2)U34 oxidoreductase region.

In the N-terminal section; belongs to the methyltransferase superfamily. tRNA (mnm(5)s(2)U34)-methyltransferase family. It in the C-terminal section; belongs to the DAO family. Requires FAD as cofactor.

The protein resides in the cytoplasm. It catalyses the reaction 5-aminomethyl-2-thiouridine(34) in tRNA + S-adenosyl-L-methionine = 5-methylaminomethyl-2-thiouridine(34) in tRNA + S-adenosyl-L-homocysteine + H(+). Functionally, catalyzes the last two steps in the biosynthesis of 5-methylaminomethyl-2-thiouridine (mnm(5)s(2)U) at the wobble position (U34) in tRNA. Catalyzes the FAD-dependent demodification of cmnm(5)s(2)U34 to nm(5)s(2)U34, followed by the transfer of a methyl group from S-adenosyl-L-methionine to nm(5)s(2)U34, to form mnm(5)s(2)U34. In Haemophilus influenzae (strain PittEE), this protein is tRNA 5-methylaminomethyl-2-thiouridine biosynthesis bifunctional protein MnmC.